Here is a 686-residue protein sequence, read N- to C-terminus: Myb-related protein B (686 aa).

A disordered region spans residues 1–28 (MARRSRGEDQDELHCQDTDSDVPEQRDG). HTH myb-type domains are found at residues 26 to 77 (RDGR…LRVL), 78 to 133 (NPDL…NPEV), and 134 to 184 (KKSS…KRKV). DNA-binding regions (H-T-H motif) lie at residues 54 to 77 (WKFLASHFPNRSDQQCQYRWLRVL), 106 to 129 (WTLIAKHLKGRLGKQCRERWHNHL), and 157 to 180 (WAEIAKLLPGRTDNAVKNHWNSTI). Disordered stretches follow at residues 315–355 (CDLT…VTEY) and 493–512 (YVVDNTPHTPTPFKNALEKY). Residues 326-343 (PSAGSSSSSNSPVRQTPS) are compositionally biased toward low complexity.

Component of the DREAM complex. Expressed in hematopoietic and non hematopoietic cells.

Its subcellular location is the nucleus. Represses v-myb- and c-myb-mediated activation of the mim-1 gene, probably by competing with other myb proteins for binding sites. It is an inhibitory member of the myb family. The sequence is that of Myb-related protein B (MYBL2) from Gallus gallus (Chicken).